The chain runs to 190 residues: Putative manganese efflux pump MntP (190 aa).

Helical transmembrane passes span Leu37 to Ile57, Leu64 to Ala84, Leu111 to Val131, Ile135 to Trp155, and Phe164 to Leu184.

Belongs to the MntP (TC 9.B.29) family.

Its subcellular location is the cell membrane. Probably functions as a manganese efflux pump. The polypeptide is Putative manganese efflux pump MntP (Corynebacterium efficiens (strain DSM 44549 / YS-314 / AJ 12310 / JCM 11189 / NBRC 100395)).